Here is a 291-residue protein sequence, read N- to C-terminus: N-acetylmannosamine kinase (291 aa).

Residues 5–12 (AIDIGGTK) and 132–139 (GVGGGVVS) contribute to the ATP site. Residues H156, C166, C168, and C173 each coordinate Zn(2+).

Belongs to the ROK (NagC/XylR) family. NanK subfamily. In terms of assembly, homodimer.

It catalyses the reaction an N-acyl-D-mannosamine + ATP = an N-acyl-D-mannosamine 6-phosphate + ADP + H(+). It participates in amino-sugar metabolism; N-acetylneuraminate degradation; D-fructose 6-phosphate from N-acetylneuraminate: step 2/5. Its function is as follows. Catalyzes the phosphorylation of N-acetylmannosamine (ManNAc) to ManNAc-6-P. The chain is N-acetylmannosamine kinase from Escherichia coli (strain SMS-3-5 / SECEC).